Reading from the N-terminus, the 258-residue chain is MTRYKAQISYDGSAFSGFQRQPNCRTVQEEIERTLKRLNSGNDVIIHGAGRTDVGVHAYGQVIHFDLPQARDVEKLRFGLDTQCPDDIDIVKVEQVSDDFHCRYDKHIKTYEFLVDIGRPKNPMMRNYATHYPYPVIIELMQEAIKDLVGTHDFTGFTASGTSVENKVRTIFDAKIQFEASKNLLIFTFTGNGFLYKQVRNMVGTLLKIGNGRMPISQIKTILQAKNRDLAGPTAAGNGLYLKEIIYEDEECFSNFRK.

D53 functions as the Nucleophile in the catalytic mechanism. Y111 is a substrate binding site.

Belongs to the tRNA pseudouridine synthase TruA family. As to quaternary structure, homodimer.

The catalysed reaction is uridine(38/39/40) in tRNA = pseudouridine(38/39/40) in tRNA. Functionally, formation of pseudouridine at positions 38, 39 and 40 in the anticodon stem and loop of transfer RNAs. The polypeptide is tRNA pseudouridine synthase A (Streptococcus agalactiae serotype V (strain ATCC BAA-611 / 2603 V/R)).